The following is a 120-amino-acid chain: ESAT-6-like protein EsxQ (120 aa).

It belongs to the WXG100 family. ESAT-6 subfamily.

It is found in the secreted. The polypeptide is ESAT-6-like protein EsxQ (Mycobacterium bovis (strain ATCC BAA-935 / AF2122/97)).